Here is a 410-residue protein sequence, read N- to C-terminus: Transforming growth factor beta-3 proprotein (410 aa).

An N-terminal signal peptide occupies residues 1–23 (MHLQRALVVLALLNLATISLSLS). Asn72, Asn133, and Asn140 each carry an N-linked (GlcNAc...) asparagine glycan. The short motif at 259 to 261 (RGD) is the Cell attachment site element. Gln291 bears the N5-methylglutamine mark. Intrachain disulfides connect Cys305/Cys314, Cys313/Cys376, Cys342/Cys407, and Cys346/Cys409.

The protein belongs to the TGF-beta family. In terms of assembly, interacts with ASPN. Latency-associated peptide: Homodimer; disulfide-linked. Latency-associated peptide: Interacts with Transforming growth factor beta-3 (TGF-beta-3) chain; interaction is non-covalent and maintains (TGF-beta-3) in a latent state. Latency-associated peptide: Interacts with LRRC32/GARP; leading to regulate activation of TGF-beta-3 and promote epithelial fusion during palate development. Latency-associated peptide: Interacts (via cell attachment site) with integrins, leading to release of the active TGF-beta-3. Transforming growth factor beta-3: Homodimer; disulfide-linked. Transforming growth factor beta-3: Interacts with TGF-beta receptors (TGFBR1 and TGFBR2), leading to signal transduction. Transforming growth factor beta-3 proprotein: The precursor proprotein is cleaved in the Golgi apparatus to form Transforming growth factor beta-3 (TGF-beta-3) and Latency-associated peptide (LAP) chains, which remain non-covalently linked, rendering TGF-beta-3 inactive. In terms of processing, methylated at Gln-291 by N6AMT1. As to expression, expressed in mammary glands with a slight increase in expression prior to lactation and again increasing at the onset of involution, expression peaks at day 3 of involution.

Its subcellular location is the secreted. It localises to the extracellular space. The protein localises to the extracellular matrix. Functionally, transforming growth factor beta-3 proprotein: Precursor of the Latency-associated peptide (LAP) and Transforming growth factor beta-3 (TGF-beta-3) chains, which constitute the regulatory and active subunit of TGF-beta-3, respectively. Its function is as follows. Required to maintain the Transforming growth factor beta-3 (TGF-beta-3) chain in a latent state during storage in extracellular matrix. Associates non-covalently with TGF-beta-3 and regulates its activation via interaction with 'milieu molecules', such as LTBP1 and LRRC32/GARP, that control activation of TGF-beta-3. Interaction with integrins results in distortion of the Latency-associated peptide chain and subsequent release of the active TGF-beta-3. In terms of biological role, transforming growth factor beta-3: Multifunctional protein that regulates embryogenesis and cell differentiation and is required in various processes such as secondary palate development. Activation into mature form follows different steps: following cleavage of the proprotein in the Golgi apparatus, Latency-associated peptide (LAP) and Transforming growth factor beta-3 (TGF-beta-3) chains remain non-covalently linked rendering TGF-beta-3 inactive during storage in extracellular matrix. At the same time, LAP chain interacts with 'milieu molecules', such as LTBP1 and LRRC32/GARP that control activation of TGF-beta-3 and maintain it in a latent state during storage in extracellular milieus. TGF-beta-3 is released from LAP by integrins: integrin-binding results in distortion of the LAP chain and subsequent release of the active TGF-beta-3. Once activated following release of LAP, TGF-beta-3 acts by binding to TGF-beta receptors (TGFBR1 and TGFBR2), which transduce signal. The sequence is that of Transforming growth factor beta-3 proprotein from Mus musculus (Mouse).